A 296-amino-acid polypeptide reads, in one-letter code: Protoheme IX farnesyltransferase (296 aa).

Helical transmembrane passes span 9 to 29 (VTKP…FLLA), 36 to 56 (YPLF…GCVF), 84 to 104 (AVSL…LWFG), 108 to 128 (LACW…SLYM), 133 to 153 (VYGT…GYCA), 163 to 183 (LILL…IAIF), 209 to 229 (ITLY…GGYA), 234 to 254 (LVVA…GYKV), and 265 to 285 (FGFS…DFMV).

It belongs to the UbiA prenyltransferase family. Protoheme IX farnesyltransferase subfamily.

The protein resides in the cell inner membrane. The enzyme catalyses heme b + (2E,6E)-farnesyl diphosphate + H2O = Fe(II)-heme o + diphosphate. Its pathway is porphyrin-containing compound metabolism; heme O biosynthesis; heme O from protoheme: step 1/1. Functionally, converts heme B (protoheme IX) to heme O by substitution of the vinyl group on carbon 2 of heme B porphyrin ring with a hydroxyethyl farnesyl side group. This chain is Protoheme IX farnesyltransferase, found in Citrobacter koseri (strain ATCC BAA-895 / CDC 4225-83 / SGSC4696).